The sequence spans 343 residues: Transmembrane protein 120A (343 aa).

Topologically, residues 1-132 are cytoplasmic; it reads MQSPPPDPLG…KQAKFAYKDE (132 aa). Lysine 130 contributes to the CoA binding site. The helical transmembrane segment at 133-152 threads the bilayer; that stretch reads YEKFKLYLTIILIVISFTCR. At 153-158 the chain is on the extracellular side; the sequence is FLLNSR. Residues 159–177 form a helical membrane-spanning segment; the sequence is VTDAAFNFLLVWYYCTLTI. At 178-190 the chain is on the cytoplasmic side; the sequence is RESILINNGSRIK. Residues serine 187 and arginine 188 each contribute to the CoA site. The chain crosses the membrane as a helical span at residues 191-209; it reads GWWVFHHYVSTFLSGVMLT. The Extracellular segment spans residues 210–218; sequence WPDGLMYQK. The chain crosses the membrane as a helical span at residues 219–240; it reads FRNQFLSFSMYQSFVQFLQYYY. Positions 237, 240, 241, and 283 each coordinate CoA. Residues 241–270 lie on the Cytoplasmic side of the membrane; the sequence is QSGCLYRLRALGERHTMDLTVEGFQSWMWR. A helical transmembrane segment spans residues 271-294; that stretch reads GLTFLLPFLFFGHFWQLFNALTLF. Residues 295-304 are Extracellular-facing; the sequence is NLARDPECKE. Residues 305–330 traverse the membrane as a helical segment; that stretch reads WQVLMCGLPFLLLFLGNFFTTLRVVH. Residues 331 to 343 lie on the Cytoplasmic side of the membrane; that stretch reads QKFHSQQHGSKKD. Lysine 332 contributes to the CoA binding site.

The protein belongs to the TMEM120 family. In terms of assembly, homodimer. Forms heterooligomer with TMEM120B. Interacts with PKD2; TMEM120A inhibits PKD2 channel activity through the physical association of PKD2 with TMEM120A.

Its subcellular location is the cell membrane. It is found in the nucleus inner membrane. The protein resides in the endoplasmic reticulum. Functionally, multifunctional protein involved in mechanosensation, and plays an essential role in lipid metabolism and adipocyte differentiation. May function as a potential ion channel involved in sensing mechanical stimuli. Mediates the mechanosensitivity of the PKD2-TMEM120A channel complex through direct physical interaction. TMEM120A seems to affect mechanosensation by inhibiting PIEZO2 channels, possibly by altering cellular lipid content. TMEM120A is structurally similar to a lipid-modifying enzyme, ELOVL7, and contains a bound coenzyme A molecule, which suggests it might function as an enzyme in lipid metabolism. Additionnaly, implicated in innate immune response against Zika virus. Acts as a key activator of the antiviral signaling involving STING1. This Rattus norvegicus (Rat) protein is Transmembrane protein 120A.